The chain runs to 1092 residues: Electroneutral sodium bicarbonate exchanger 1 (1092 aa).

Disordered regions lie at residues 1–26 (MPAG…VDQG), 55–95 (LGRQ…HDTP), and 243–263 (KKQS…PQSA). At 1 to 478 (MPAGSNEPDG…DYRDALSLQC (478 aa)) the chain is on the extracellular side. The span at 58-76 (QSHRHHRTHGQKHRRRGGR) shows a compositional bias: basic residues. Basic and acidic residues predominate over residues 243 to 255 (KKQSDPHSMDRDG). A helical transmembrane segment spans residues 479–499 (LASFLFLYCACMSPVITFGGL). At 500 to 507 (LGEATEGR) the chain is on the cytoplasmic side. Residues 508–528 (ISAIESLFGASMTGIAYSLFA) traverse the membrane as a helical segment. The Extracellular segment spans residues 529–565 (GQPLTILGSTGPVLVFEKILFKFCKDYALSYLSLRAC). Residues 566–586 (IGLWTAFLCIVLVATDASSLV) form a helical membrane-spanning segment. The Cytoplasmic segment spans residues 587–595 (CYITRFTEE). The helical transmembrane segment at 596–616 (AFASLICIIFIYEAIEKLIHL) threads the bilayer. Topologically, residues 617–687 (AETYPIHMHS…EFIGSACGHH (71 aa)) are extracellular. Intrachain disulfides connect Cys636–Cys684 and Cys638–Cys672. 2 N-linked (GlcNAc) asparagine glycosylation sites follow: Asn646 and Asn666. The chain crosses the membrane as a helical span at residues 688–708 (GPYTPDVLFWSCILFFATFIV). Topologically, residues 709 to 731 (SSTLKTFKTSRYFPTRVRSTVSD) are cytoplasmic. A helical membrane pass occupies residues 732-752 (FAVFLTIFTMVILDFLIGVPS). Residues 753–778 (PKLQVPSVFKPTRDDRGWFISPIGPN) lie on the Extracellular side of the membrane. A helical transmembrane segment spans residues 779-799 (PWWTVIAAIIPALLCTILIFM). The Cytoplasmic portion of the chain corresponds to 800 to 824 (DQQITAVIINRKEHKLKKGCGYHLD). A helical transmembrane segment spans residues 825-845 (LLVVAIMLGVCSLMGLPWFVA). Residues 846–881 (ATVLSITHVNSLKLESECSAPGEQPKFLGIREQRVT) lie on the Extracellular side of the membrane. A helical membrane pass occupies residues 882–902 (GLMIFVLMGCSVFMTAVLKFI). The Cytoplasmic segment spans residues 903-904 (PM). The chain crosses the membrane as a helical span at residues 905–925 (PVLYGVFLYMGVSSLQGIQFF). At 926–962 (DRLKLFGMPAKHQPDFIYLRHVPLRKVHLFTLVQLTC) the chain is on the extracellular side. The chain crosses the membrane as a helical span at residues 963–983 (LVLLWVIKASPAAIVFPMMVL). Residues 984–1092 (ALVFVRKVMD…GNTKEKSPFN (109 aa)) lie on the Cytoplasmic side of the membrane.

It belongs to the anion exchanger (TC 2.A.31) family. In terms of assembly, homodimer. As to expression, expressed in the Purkinje cells and dendrites in the molecular layer of the cerebellum (at protein level). Expressed in the hippocampal neurons (at protein level). Strong expression observed in testis and moderate expression in kidney inner medulla, the submandibular gland, eye, cerebrum and cerebellum.

It is found in the cell membrane. The protein resides in the apical cell membrane. Its subcellular location is the basolateral cell membrane. The protein localises to the cytoplasmic vesicle. It localises to the secretory vesicle. It is found in the synaptic vesicle membrane. It catalyses the reaction 2 hydrogencarbonate(out) + chloride(in) + Na(+)(out) = 2 hydrogencarbonate(in) + chloride(out) + Na(+)(in). Its function is as follows. Mediates electroneutral sodium- and carbonate-dependent chloride-HCO3(-) exchange with a Na(+):HCO3(-) stoichiometry of 2:1. Plays a major role in pH regulation in neurons. Mediates sodium reabsorption in the renal cortical collecting ducts. In Rattus norvegicus (Rat), this protein is Electroneutral sodium bicarbonate exchanger 1.